A 199-amino-acid chain; its full sequence is Homeobox protein ceh-19 (199 aa).

A disordered region spans residues Met-1–Asn-42. Positions Glu-18–Glu-40 are enriched in acidic residues. A DNA-binding region (homeobox) is located at residues Glu-94–Leu-153.

It localises to the nucleus. Functionally, probable transcription factor. Required for MC motor neuron differentiation and function, including role in modulating pharyngeal pumping. Regulates gene expression of FMRFamide-like neuropeptide flp-2 in MC motor neurons. May act downstream of transcription factor pha-4. The polypeptide is Homeobox protein ceh-19 (ceh-19) (Caenorhabditis elegans).